The following is a 360-amino-acid chain: Glutamate 5-kinase (360 aa).

Lys7 contributes to the ATP binding site. Residues Ser47, Asp134, and Asn146 each coordinate substrate. Residues 166–167 and 210–216 each bind ATP; these read TD and TGGISTK. A PUA domain is found at 275–356; sequence VGKITLDDGA…SSIIVVHRDV (82 aa).

This sequence belongs to the glutamate 5-kinase family.

It localises to the cytoplasm. The catalysed reaction is L-glutamate + ATP = L-glutamyl 5-phosphate + ADP. It participates in amino-acid biosynthesis; L-proline biosynthesis; L-glutamate 5-semialdehyde from L-glutamate: step 1/2. Functionally, catalyzes the transfer of a phosphate group to glutamate to form L-glutamate 5-phosphate. This chain is Glutamate 5-kinase, found in Prochlorococcus marinus (strain MIT 9301).